Here is an 85-residue protein sequence, read N- to C-terminus: Probable [Fe-S]-dependent transcriptional repressor (85 aa).

4 residues coordinate iron-sulfur cluster: C56, C61, C64, and C71.

It belongs to the FeoC family.

In terms of biological role, may function as a transcriptional regulator that controls feoABC expression. This Yersinia pseudotuberculosis serotype O:1b (strain IP 31758) protein is Probable [Fe-S]-dependent transcriptional repressor.